The primary structure comprises 163 residues: Cyclic pyranopterin monophosphate synthase (163 aa).

Residues 74–76 (MCH) and 111–112 (ME) contribute to the substrate site. Residue Asp126 is part of the active site.

The protein belongs to the MoaC family. In terms of assembly, homohexamer; trimer of dimers.

The enzyme catalyses (8S)-3',8-cyclo-7,8-dihydroguanosine 5'-triphosphate = cyclic pyranopterin phosphate + diphosphate. Its pathway is cofactor biosynthesis; molybdopterin biosynthesis. Catalyzes the conversion of (8S)-3',8-cyclo-7,8-dihydroguanosine 5'-triphosphate to cyclic pyranopterin monophosphate (cPMP). This is Cyclic pyranopterin monophosphate synthase from Desulfitobacterium hafniense (strain DSM 10664 / DCB-2).